We begin with the raw amino-acid sequence, 51 residues long: MARYRCCRSQSRSRCCRRRRRCRRRRRRRCRARRRAMRCCRRRYRLRCRRY.

The protein belongs to the protamine P1 family. In terms of tissue distribution, testis.

Its subcellular location is the nucleus. The protein resides in the chromosome. Its function is as follows. Protamines substitute for histones in the chromatin of sperm during the haploid phase of spermatogenesis. They compact sperm DNA into a highly condensed, stable and inactive complex. This chain is Sperm protamine P1 (PRM1), found in Macaca mulatta (Rhesus macaque).